We begin with the raw amino-acid sequence, 194 residues long: uncharacterized protein (194 aa).

The N-terminal stretch at 1–24 (MRKFVAFFVIVALAALLAGCGGQG) is a signal peptide.

This is an uncharacterized protein from Archaeoglobus fulgidus (strain ATCC 49558 / DSM 4304 / JCM 9628 / NBRC 100126 / VC-16).